An 822-amino-acid polypeptide reads, in one-letter code: Putative pentatricopeptide repeat-containing protein At5g13230, mitochondrial (822 aa).

The transit peptide at 1–70 (MIVFMRIIHV…QKNDPISAKA (70 aa)) directs the protein to the mitochondrion. PPR repeat units lie at residues 48–82 (DSHAYGAMLRRCIQKNDPISAKAIHCDILKKGSCL), 83–117 (DLFATNILLNAYVKAGFDKDALNLFDEMPERNNVS), 145–179 (NPHVFTSFLKLFVSLDKAEICPWLHSPIVKLGYDS), 180–210 (NAFVGAALINAYSVCGSVDSARTVFEGILCK), 211–245 (DIVVWAGIVSCYVENGYFEDSLKLLSCMRMAGFMP), 246–280 (NNYTFDTALKASIGLGAFDFAKGVHGQILKTCYVL), 281–311 (DPRVGVGLLQLYTQLGDMSDAFKVFNEMPKN), 312–346 (DVVPWSFMIARFCQNGFCNEAVDLFIRMREAFVVP), 347–381 (NEFTLSSILNGCAIGKCSGLGEQLHGLVVKVGFDL), 382–416 (DIYVSNALIDVYAKCEKMDTAVKLFAELSSKNEVS), 417–447 (WNTVIVGYENLGEGGKAFSMFREALRNQVSV), 448–482 (TEVTFSSALGACASLASMDLGVQVHGLAIKTNNAK), 483–513 (KVAVSNSLIDMYAKCGDIKFAQSVFNEMETI), 514–548 (DVASWNALISGYSTHGLGRQALRILDIMKDRDCKP), 549–584 (NGLTFLGVLSGCSNAGLIDQGQECFESMIRDHGIEP), and 585–619 (CLEHYTCMVRLLGRSGQLDKAMKLIEGIPYEPSVM). Positions 620–695 (IWRAMLSASM…EPGLSWIEHQ (76 aa)) are type E motif. The tract at residues 696–726 (GDVHYFSVGLSDHPDMKLINGMLEWLNMKAT) is type E(+) motif. The segment at 727–822 (RAGYVPDRNA…AGVCSCGDHW (96 aa)) is type DYW motif.

The protein belongs to the PPR family. PCMP-H subfamily.

The protein localises to the mitochondrion. The sequence is that of Putative pentatricopeptide repeat-containing protein At5g13230, mitochondrial (PCMP-H89) from Arabidopsis thaliana (Mouse-ear cress).